Reading from the N-terminus, the 757-residue chain is Xaa-Pro dipeptidyl-peptidase (757 aa).

Catalysis depends on charge relay system residues S348, D468, and H498.

It belongs to the peptidase S15 family. Homodimer.

It is found in the cytoplasm. It catalyses the reaction Hydrolyzes Xaa-Pro-|- bonds to release unblocked, N-terminal dipeptides from substrates including Ala-Pro-|-p-nitroanilide and (sequentially) Tyr-Pro-|-Phe-Pro-|-Gly-Pro-|-Ile.. In terms of biological role, removes N-terminal dipeptides sequentially from polypeptides having unsubstituted N-termini provided that the penultimate residue is proline. The sequence is that of Xaa-Pro dipeptidyl-peptidase from Streptococcus pneumoniae (strain ATCC 700669 / Spain 23F-1).